Here is a 481-residue protein sequence, read N- to C-terminus: Cardiolipin synthase A (481 aa).

The next 2 helical transmembrane spans lie at 10-30 and 40-60; these read FFGY…LHAL and IAWA…YLIF. 2 consecutive PLD phosphodiesterase domains span residues 220-247 and 394-421; these read VNFR…GDEY and QPGF…DNRS. Residues H225, K227, D232, H399, K401, and D406 contribute to the active site.

This sequence belongs to the phospholipase D family. Cardiolipin synthase subfamily. ClsA sub-subfamily.

It localises to the cell inner membrane. It carries out the reaction 2 a 1,2-diacyl-sn-glycero-3-phospho-(1'-sn-glycerol) = a cardiolipin + glycerol. Its function is as follows. Catalyzes the reversible phosphatidyl group transfer from one phosphatidylglycerol molecule to another to form cardiolipin (CL) (diphosphatidylglycerol) and glycerol. The sequence is that of Cardiolipin synthase A from Pseudomonas putida (strain ATCC 47054 / DSM 6125 / CFBP 8728 / NCIMB 11950 / KT2440).